We begin with the raw amino-acid sequence, 201 residues long: MSRYRGPRFKKIRRLGALPGLTSKRPKAGSDLRNQSRSVKKSQYRIRLEEKQKLRFHYGLTERQLLKYVRIAGKAKGSTGQVLLQLLEMRLDNILFRLGMALTIPQARQLVNHGHILVNGRIVDIPSYRCKPRDIITVKDEQNSRTLVQNLIDSSAPEELPNHLTLHTFQYEGLVNQIIDRKCVGLKINELLVVEYYSRQT.

An S4 RNA-binding domain is found at 89-152 (MRLDNILFRL…NSRTLVQNLI (64 aa)).

This sequence belongs to the universal ribosomal protein uS4 family. In terms of assembly, part of the 30S ribosomal subunit. Contacts protein S5. The interaction surface between S4 and S5 is involved in control of translational fidelity.

It is found in the plastid. The protein resides in the chloroplast. Functionally, one of the primary rRNA binding proteins, it binds directly to 16S rRNA where it nucleates assembly of the body of the 30S subunit. With S5 and S12 plays an important role in translational accuracy. The protein is Small ribosomal subunit protein uS4c (rps4) of Crucihimalaya wallichii (Rock-cress).